Consider the following 269-residue polypeptide: Putative hydro-lyase RL2444 (269 aa).

It belongs to the D-glutamate cyclase family.

This chain is Putative hydro-lyase RL2444, found in Rhizobium johnstonii (strain DSM 114642 / LMG 32736 / 3841) (Rhizobium leguminosarum bv. viciae).